Here is a 101-residue protein sequence, read N- to C-terminus: Large ribosomal subunit protein uL24 (101 aa).

Belongs to the universal ribosomal protein uL24 family. Part of the 50S ribosomal subunit.

In terms of biological role, one of two assembly initiator proteins, it binds directly to the 5'-end of the 23S rRNA, where it nucleates assembly of the 50S subunit. One of the proteins that surrounds the polypeptide exit tunnel on the outside of the subunit. This chain is Large ribosomal subunit protein uL24, found in Borrelia garinii subsp. bavariensis (strain ATCC BAA-2496 / DSM 23469 / PBi) (Borreliella bavariensis).